Reading from the N-terminus, the 128-residue chain is Large ribosomal subunit protein bL12 (128 aa).

The protein belongs to the bacterial ribosomal protein bL12 family. In terms of assembly, homodimer. Part of the ribosomal stalk of the 50S ribosomal subunit. Forms a multimeric L10(L12)X complex, where L10 forms an elongated spine to which 2 to 4 L12 dimers bind in a sequential fashion. Binds GTP-bound translation factors.

Forms part of the ribosomal stalk which helps the ribosome interact with GTP-bound translation factors. Is thus essential for accurate translation. The sequence is that of Large ribosomal subunit protein bL12 from Synechococcus sp. (strain CC9902).